The sequence spans 269 residues: Expansin-B9 (269 aa).

The signal sequence occupies residues 1–24 (MGSLTTNIVLAVAVVAALVGGGSC). An N-linked (GlcNAc...) asparagine glycan is attached at asparagine 34. The region spanning 63 to 169 (GGACGIKNVN…RRVRCKYPGG (107 aa)) is the Expansin-like EG45 domain. 3 disulfide bridges follow: cysteine 66–cysteine 94, cysteine 97–cysteine 164, and cysteine 102–cysteine 108. Residues 183–264 (NYLAVLVKFV…NWMPDAIYVS (82 aa)) form the Expansin-like CBD domain.

The protein belongs to the expansin family. Expansin B subfamily.

It is found in the secreted. The protein resides in the cell wall. The protein localises to the membrane. Functionally, may cause loosening and extension of plant cell walls by disrupting non-covalent bonding between cellulose microfibrils and matrix glucans. No enzymatic activity has been found. May be required for rapid internodal elongation in deepwater rice during submergence. The chain is Expansin-B9 (EXPB9) from Oryza sativa subsp. japonica (Rice).